Here is a 356-residue protein sequence, read N- to C-terminus: 3,4-dihydroxy-2-butanone 4-phosphate synthase (356 aa).

Residues 1–211 (MNAILSDQKT…ISDIVEYRMM (211 aa)) are DHBP synthase. D-ribulose 5-phosphate is bound by residues 38–39 (RE), D43, 150–154 (RIGHT), and E174. Position 39 (E39) interacts with Mg(2+). H153 provides a ligand contact to Mg(2+). The interval 212–356 (NESLIRVIAE…KSTNVNETVA (145 aa)) is GTP cyclohydrolase II-like.

This sequence in the N-terminal section; belongs to the DHBP synthase family. It in the C-terminal section; belongs to the GTP cyclohydrolase II family. Mg(2+) is required as a cofactor. Mn(2+) serves as cofactor.

The catalysed reaction is D-ribulose 5-phosphate = (2S)-2-hydroxy-3-oxobutyl phosphate + formate + H(+). It participates in cofactor biosynthesis; riboflavin biosynthesis; 2-hydroxy-3-oxobutyl phosphate from D-ribulose 5-phosphate: step 1/1. Catalyzes the conversion of D-ribulose 5-phosphate to formate and 3,4-dihydroxy-2-butanone 4-phosphate. In Sulfurospirillum multivorans (Dehalospirillum multivorans), this protein is 3,4-dihydroxy-2-butanone 4-phosphate synthase (ribB).